The primary structure comprises 79 residues: UPF0180 protein BCG9842_B3897 (79 aa).

Belongs to the UPF0180 family.

The sequence is that of UPF0180 protein BCG9842_B3897 from Bacillus cereus (strain G9842).